The sequence spans 474 residues: tRNA-2-methylthio-N(6)-dimethylallyladenosine synthase (474 aa).

One can recognise an MTTase N-terminal domain in the interval 3–120 (KKLHIKTWGC…LPEMINHVQG (118 aa)). The [4Fe-4S] cluster site is built by cysteine 12, cysteine 49, cysteine 83, cysteine 157, cysteine 161, and cysteine 164. A Radical SAM core domain is found at 143 to 375 (RAEGPTAFVS…QQRISQQAME (233 aa)). Residues 378–441 (RKMVGTVQRV…ASSLRGILLR (64 aa)) form the TRAM domain.

The protein belongs to the methylthiotransferase family. MiaB subfamily. As to quaternary structure, monomer. [4Fe-4S] cluster serves as cofactor.

It is found in the cytoplasm. It carries out the reaction N(6)-dimethylallyladenosine(37) in tRNA + (sulfur carrier)-SH + AH2 + 2 S-adenosyl-L-methionine = 2-methylsulfanyl-N(6)-dimethylallyladenosine(37) in tRNA + (sulfur carrier)-H + 5'-deoxyadenosine + L-methionine + A + S-adenosyl-L-homocysteine + 2 H(+). Its function is as follows. Catalyzes the methylthiolation of N6-(dimethylallyl)adenosine (i(6)A), leading to the formation of 2-methylthio-N6-(dimethylallyl)adenosine (ms(2)i(6)A) at position 37 in tRNAs that read codons beginning with uridine. The polypeptide is tRNA-2-methylthio-N(6)-dimethylallyladenosine synthase (Yersinia pestis bv. Antiqua (strain Antiqua)).